The primary structure comprises 488 residues: Malonate-semialdehyde dehydrogenase (488 aa).

NAD(+) is bound by residues alanine 150, phenylalanine 152, lysine 176, glutamate 179, arginine 180, serine 229, and threonine 251. Residue cysteine 284 is the Nucleophile of the active site. Glutamate 382 contributes to the NAD(+) binding site.

Belongs to the aldehyde dehydrogenase family. IolA subfamily. Homotetramer.

The enzyme catalyses 3-oxopropanoate + NAD(+) + CoA + H2O = hydrogencarbonate + acetyl-CoA + NADH + H(+). The catalysed reaction is 2-methyl-3-oxopropanoate + NAD(+) + CoA + H2O = propanoyl-CoA + hydrogencarbonate + NADH + H(+). It functions in the pathway polyol metabolism; myo-inositol degradation into acetyl-CoA; acetyl-CoA from myo-inositol: step 7/7. In terms of biological role, catalyzes the oxidation of malonate semialdehyde (MSA) and methylmalonate semialdehyde (MMSA) into acetyl-CoA and propanoyl-CoA, respectively. Is involved in a myo-inositol catabolic pathway. Bicarbonate, and not CO2, is the end-product of the enzymatic reaction. This is Malonate-semialdehyde dehydrogenase from Listeria monocytogenes serovar 1/2a (strain ATCC BAA-679 / EGD-e).